The following is a 289-amino-acid chain: 4-hydroxy-3-methylbut-2-enyl diphosphate reductase (289 aa).

Residue Cys13 participates in [4Fe-4S] cluster binding. (2E)-4-hydroxy-3-methylbut-2-enyl diphosphate contacts are provided by His42 and His74. The dimethylallyl diphosphate site is built by His42 and His74. Isopentenyl diphosphate contacts are provided by His42 and His74. Position 96 (Cys96) interacts with [4Fe-4S] cluster. His124 is a (2E)-4-hydroxy-3-methylbut-2-enyl diphosphate binding site. Residue His124 participates in dimethylallyl diphosphate binding. His124 is an isopentenyl diphosphate binding site. The Proton donor role is filled by Glu126. Thr165 lines the (2E)-4-hydroxy-3-methylbut-2-enyl diphosphate pocket. Cys193 lines the [4Fe-4S] cluster pocket. Residues Ser221, Asn223, and Ser265 each contribute to the (2E)-4-hydroxy-3-methylbut-2-enyl diphosphate site. Positions 221, 223, and 265 each coordinate dimethylallyl diphosphate. Isopentenyl diphosphate contacts are provided by Ser221, Asn223, and Ser265.

It belongs to the IspH family. The cofactor is [4Fe-4S] cluster.

It catalyses the reaction isopentenyl diphosphate + 2 oxidized [2Fe-2S]-[ferredoxin] + H2O = (2E)-4-hydroxy-3-methylbut-2-enyl diphosphate + 2 reduced [2Fe-2S]-[ferredoxin] + 2 H(+). The enzyme catalyses dimethylallyl diphosphate + 2 oxidized [2Fe-2S]-[ferredoxin] + H2O = (2E)-4-hydroxy-3-methylbut-2-enyl diphosphate + 2 reduced [2Fe-2S]-[ferredoxin] + 2 H(+). It participates in isoprenoid biosynthesis; dimethylallyl diphosphate biosynthesis; dimethylallyl diphosphate from (2E)-4-hydroxy-3-methylbutenyl diphosphate: step 1/1. Its pathway is isoprenoid biosynthesis; isopentenyl diphosphate biosynthesis via DXP pathway; isopentenyl diphosphate from 1-deoxy-D-xylulose 5-phosphate: step 6/6. Highly sensitive to dioxygen. Its function is as follows. Catalyzes the conversion of 1-hydroxy-2-methyl-2-(E)-butenyl 4-diphosphate (HMBPP) into a mixture of isopentenyl diphosphate (IPP) and dimethylallyl diphosphate (DMAPP). Acts in the terminal step of the DOXP/MEP pathway for isoprenoid precursor biosynthesis. The protein is 4-hydroxy-3-methylbut-2-enyl diphosphate reductase of Aquifex aeolicus (strain VF5).